A 1024-amino-acid chain; its full sequence is Beta-galactosidase (1024 aa).

Positions 103 and 202 each coordinate substrate. Na(+) is bound at residue Asp202. Residues Glu417, His419, and Glu462 each coordinate Mg(2+). Residues Glu462 and 538–541 (EYAH) contribute to the substrate site. Glu462 serves as the catalytic Proton donor. Residue Glu538 is the Nucleophile of the active site. Asn598 lines the Mg(2+) pocket. Phe602 and Asn605 together coordinate Na(+). Positions 605 and 1000 each coordinate substrate.

The protein belongs to the glycosyl hydrolase 2 family. As to quaternary structure, homotetramer. The cofactor is Mg(2+). Requires Na(+) as cofactor.

It catalyses the reaction Hydrolysis of terminal non-reducing beta-D-galactose residues in beta-D-galactosides.. This Escherichia coli O17:K52:H18 (strain UMN026 / ExPEC) protein is Beta-galactosidase.